An 843-amino-acid polypeptide reads, in one-letter code: N-acetyltransferase ESCO1 (843 aa).

A disordered region spans residues 1 to 78; the sequence is MSIQEKSKEN…SASCSADKTA (78 aa). Over residues 18 to 28 the composition is skewed to acidic residues; it reads SEDENLEEEVE. Positions 66-78 are enriched in polar residues; sequence STRSASCSADKTA. Serine 202 is modified (phosphoserine). The interval 262–300 is disordered; it reads NELRKSAHTQVSTSTKRPQIPLPLVPEHSDDQELEQAGK. Over residues 269 to 278 the composition is skewed to polar residues; that stretch reads HTQVSTSTKR. Residue lysine 335 forms a Glycyl lysine isopeptide (Lys-Gly) (interchain with G-Cter in SUMO2) linkage. Serine 415 bears the Phosphoserine mark. Residues 546–584 form a disordered region; the sequence is DRTFPGSAPNQQHSVLSDEASINRKNRDVPPNHSQLKHD. Over residues 566-584 the composition is skewed to basic and acidic residues; sequence SINRKNRDVPPNHSQLKHD. The CCHH-type zinc-finger motif lies at 620–644; the sequence is VSCNICGMLYTASNPEDETQHLLFH. Acetyl-CoA contacts are provided by residues 775–777, 783–788, and 815–817; these read IWV, RKKIAS, and TPD.

Belongs to the acetyltransferase family. ECO subfamily. As to quaternary structure, the subunit structure is controversial. Monomer. Homodimer. In terms of processing, phosphorylated during mitosis.

The protein resides in the nucleus. It is found in the chromosome. The catalysed reaction is L-lysyl-[protein] + acetyl-CoA = N(6)-acetyl-L-lysyl-[protein] + CoA + H(+). Its function is as follows. Acetyltransferase required for the establishment of sister chromatid cohesion. Couples the processes of cohesion and DNA replication to ensure that only sister chromatids become paired together. In contrast to the structural cohesins, the deposition and establishment factors are required only during S phase. Acts by mediating the acetylation of cohesin component SMC3. The sequence is that of N-acetyltransferase ESCO1 (Esco1) from Mus musculus (Mouse).